We begin with the raw amino-acid sequence, 171 residues long: Adenine phosphoribosyltransferase (171 aa).

It belongs to the purine/pyrimidine phosphoribosyltransferase family. As to quaternary structure, homodimer.

The protein resides in the cytoplasm. The catalysed reaction is AMP + diphosphate = 5-phospho-alpha-D-ribose 1-diphosphate + adenine. Its pathway is purine metabolism; AMP biosynthesis via salvage pathway; AMP from adenine: step 1/1. In terms of biological role, catalyzes a salvage reaction resulting in the formation of AMP, that is energically less costly than de novo synthesis. The chain is Adenine phosphoribosyltransferase from Synechococcus sp. (strain ATCC 27144 / PCC 6301 / SAUG 1402/1) (Anacystis nidulans).